Here is a 297-residue protein sequence, read N- to C-terminus: Tyrosine recombinase XerC (297 aa).

Residues methionine 1–lysine 83 form the Core-binding (CB) domain. The Tyr recombinase domain occupies threonine 104–aspartate 291. Active-site residues include arginine 148, lysine 172, histidine 243, arginine 246, and histidine 269. The O-(3'-phospho-DNA)-tyrosine intermediate role is filled by tyrosine 278.

This sequence belongs to the 'phage' integrase family. XerC subfamily. In terms of assembly, forms a cyclic heterotetrameric complex composed of two molecules of XerC and two molecules of XerD.

Its subcellular location is the cytoplasm. Functionally, site-specific tyrosine recombinase, which acts by catalyzing the cutting and rejoining of the recombining DNA molecules. The XerC-XerD complex is essential to convert dimers of the bacterial chromosome into monomers to permit their segregation at cell division. It also contributes to the segregational stability of plasmids. The protein is Tyrosine recombinase XerC of Mycobacterium leprae (strain TN).